A 435-amino-acid chain; its full sequence is Elongation factor 1-alpha (435 aa).

The tr-type G domain maps to 4–227 (KPHLNLIVIG…YLDQLELPPK (224 aa)). The interval 13–20 (GHIDHGKS) is G1. 13-20 (GHIDHGKS) is a binding site for GTP. Serine 20 is a binding site for Mg(2+). Positions 69-73 (GVTIN) are G2. A G3 region spans residues 90–93 (DAPG). GTP-binding positions include 90–94 (DAPGH) and 152–155 (NKMD). The tract at residues 152-155 (NKMD) is G4. The interval 193-195 (VAP) is G5.

The protein belongs to the TRAFAC class translation factor GTPase superfamily. Classic translation factor GTPase family. EF-Tu/EF-1A subfamily.

The protein resides in the cytoplasm. The enzyme catalyses GTP + H2O = GDP + phosphate + H(+). GTP hydrolase that promotes the GTP-dependent binding of aminoacyl-tRNA to the A-site of ribosomes during protein biosynthesis. This chain is Elongation factor 1-alpha, found in Saccharolobus solfataricus (strain ATCC 35092 / DSM 1617 / JCM 11322 / P2) (Sulfolobus solfataricus).